We begin with the raw amino-acid sequence, 412 residues long: Small ribosomal subunit protein mL103 (rPPR7) (412 aa).

Residues 1-14 constitute a mitochondrion transit peptide; it reads MASSRISLRLVRRF. The segment covering 21 to 37 has biased composition (polar residues); the sequence is GTTTAPSSGKISVSKAK. A disordered region spans residues 21–43; the sequence is GTTTAPSSGKISVSKAKSTLRKE. 8 PPR repeats span residues 101-135, 136-166, 173-207, 208-242, 243-276, 277-311, 312-346, and 347-377; these read EEPF…GTPR, SAVS…IPQR, DKIS…GMEV, TTIA…GCEL, DNAA…GLKP, DTIS…NCAP, NAAT…HKIP, and DFNT…VKKK.

It belongs to the PPR family. P subfamily. In terms of assembly, component of the mitochondrial ribosome small subunit.

Its subcellular location is the mitochondrion. In Arabidopsis thaliana (Mouse-ear cress), this protein is Small ribosomal subunit protein mL103 (rPPR7).